The following is a 951-amino-acid chain: Coiled-coil domain-containing protein 15 (951 aa).

4 coiled-coil regions span residues 64–89 (LIEE…QVKY), 154–193 (DGIE…VIKK), 782–813 (MDIE…EQEC), and 839–874 (LAQL…IQEK).

As to quaternary structure, interacts with POC5, POC1B, CETN2 and FAM161A.

The protein localises to the cytoplasm. It is found in the cytoskeleton. Its subcellular location is the microtubule organizing center. The protein resides in the centrosome. It localises to the centriole. The protein localises to the centriolar satellite. In terms of biological role, plays an important role in primary cilium assembly, maintenance, and length regulation. Interacts with centriole inner scaffold proteins to promote proper centriole size and integrity and assembly of functional cilia. Required for the recruitment of both the inner scaffold protein POC1B and the distal SFI1/CETN2 complex to centrioles. The protein is Coiled-coil domain-containing protein 15 (CCDC15) of Homo sapiens (Human).